Consider the following 314-residue polypeptide: Serine/threonine-protein phosphatase CPPED1 (314 aa).

S2 carries the phosphoserine modification. Positions 47-250 (KAWSTGDCDN…KVVFSGHYHR (204 aa)) are catalytic. Positions 53, 90, 127, and 247 each coordinate a divalent metal cation. S294 is subject to Phosphoserine.

Belongs to the metallophosphoesterase superfamily. CPPED1 family. Requires a divalent metal cation as cofactor. As to expression, expressed in subcutaneous adipose tissue.

The protein resides in the cytoplasm. It catalyses the reaction O-phospho-L-seryl-[protein] + H2O = L-seryl-[protein] + phosphate. The catalysed reaction is O-phospho-L-threonyl-[protein] + H2O = L-threonyl-[protein] + phosphate. Functionally, protein phosphatase that dephosphorylates AKT family kinase specifically at 'Ser-473', blocking cell cycle progression and promoting cell apoptosis. May play an inhibitory role in glucose uptake by adipocytes. This is Serine/threonine-protein phosphatase CPPED1 (CPPED1) from Homo sapiens (Human).